The following is a 199-amino-acid chain: Ciliary neurotrophic factor (199 aa).

The protein belongs to the CNTF family. Nervous system.

The protein resides in the cytoplasm. Its function is as follows. CNTF is a survival factor for various neuronal cell types. Seems to prevent the degeneration of motor axons after axotomy. In Oryctolagus cuniculus (Rabbit), this protein is Ciliary neurotrophic factor (CNTF).